The following is a 580-amino-acid chain: Myb-like protein C (580 aa).

4 disordered regions span residues 1 to 58, 73 to 101, 121 to 203, and 354 to 380; these read MTMI…YGSN, QYSI…TLLS, NVYN…SSTN, and SDND…NPPN. 3 stretches are compositionally biased toward low complexity: residues 20–47, 87–101, and 126–203; these read NNNN…NNNN, NSTM…TLLS, and PHQS…SSTN. The span at 361 to 371 shows a compositional bias: basic residues; that stretch reads KKKRERIRKSV. 2 HTH myb-type domains span residues 368-430 and 431-482; these read RKSV…CPAI and RKGS…SREV. DNA-binding regions (H-T-H motif) lie at residues 402 to 426 and 454 to 478; these read WKKI…KRVL and WKNV…KSCM. A Myb-like domain is found at 484 to 546; it reads WSSREDEILQ…ECKTRYFQLN (63 aa).

It localises to the nucleus. Its function is as follows. Transcription activator required for the culmination, at the time of the fruiting body formation. Regulates genes involved in the cell differentiation within the fruiting body. The protein is Myb-like protein C (mybC) of Dictyostelium discoideum (Social amoeba).